Consider the following 282-residue polypeptide: Elongation factor Ts (282 aa).

The interval 79 to 82 (TDFV) is involved in Mg(2+) ion dislocation from EF-Tu.

It belongs to the EF-Ts family.

It localises to the cytoplasm. Its function is as follows. Associates with the EF-Tu.GDP complex and induces the exchange of GDP to GTP. It remains bound to the aminoacyl-tRNA.EF-Tu.GTP complex up to the GTP hydrolysis stage on the ribosome. The chain is Elongation factor Ts from Shewanella sediminis (strain HAW-EB3).